Consider the following 185-residue polypeptide: MSLIRKLKPGTISLVLGPMFAGKTTFLIHCINMLERLEKKVVFIKSTKNTRDKTIQTHSGIQLRPNQCKIIESAQLSDVGSLTDTHAVVIDEAHFFDDLIRCRTWADEKKIIILAGLNASFEQKMFQPIVRIFPYCNWVKYIGRTCMKCNRHNACFNVRKNADKTLILAGGSELYITCCNNCLKK.

17–24 provides a ligand contact to ATP; sequence GPMFAGKT. Catalysis depends on glutamate 92, which acts as the Proton acceptor. Phenylalanine 121 provides a ligand contact to substrate. Zn(2+) contacts are provided by cysteine 146 and cysteine 149. Residue 166-170 participates in substrate binding; it reads LILAG. Zn(2+)-binding residues include cysteine 179 and cysteine 182.

This sequence belongs to the thymidine kinase family.

The enzyme catalyses thymidine + ATP = dTMP + ADP + H(+). Functionally, phosphorylates thymidine. ASFV replicates in the cytoplasm of infected cells and contains genes encoding a number of enzymes needed for DNA synthesis, including thymidine kinase. Important for growth in swine macrophages in vitro and is a virus virulence factor in swine. The polypeptide is Thymidine kinase (African swine fever virus (isolate Pig/Kenya/KEN-50/1950) (ASFV)).